The chain runs to 1442 residues: Protein patched homolog 1 (1442 aa).

The tract at residues 1–45 (MASAADALEPESGSSTAGGGSHPVRAARSARGRRRRSGGTRRAAA) is disordered. Over 1-101 (MASAADALEP…GCYIQKNCGK (101 aa)) the chain is Cytoplasmic. A compositionally biased stretch (basic residues) spans 28-39 (RSARGRRRRSGG). Residues 102–122 (FLVVGLLYSAFAVGLRAANLE) form a helical membrane-spanning segment. The Extracellular segment spans residues 123–436 (TNVEELWVEV…LDDILKSFSD (314 aa)). Asn-141, Asn-312, Asn-349, and Asn-414 each carry an N-linked (GlcNAc...) asparagine glycan. Residues 437-457 (VSVIRVASGYLLMLAYACLTM) traverse the membrane as a helical segment. Residues 438-598 (SVIRVASGYL…LLIFPAILSM (161 aa)) enclose the SSD domain. The Cytoplasmic segment spans residues 458–472 (LRWDCAKSQGAVGLA). A helical transmembrane segment spans residues 473–493 (GVLLVALSVAAGLGLCSLIGI). Residues 494–501 (SFNAATTQ) lie on the Extracellular side of the membrane. Residues 502–522 (VLPFLALGVGVDDVFLLAHAF) form a helical membrane-spanning segment. Residues 523 to 547 (SETGQNKRIPFEDRTGECLKRTGAS) are Cytoplasmic-facing. Residues 548-568 (VALTSISNVTAFFMAALIPIP) traverse the membrane as a helical segment. At 569–577 (ALRAFSLQA) the chain is on the extracellular side. Residues 578–598 (AVVVVFNFAMVLLIFPAILSM) traverse the membrane as a helical segment. Topologically, residues 599–747 (DLYRREDRRL…HYAPFLLKPK (149 aa)) are cytoplasmic. Residues 748-768 (AKVVVIFLFLGLLGLSLYGTT) form a helical membrane-spanning segment. Residues 769–1026 (RVRDGLDLTD…WEQYIGLRHW (258 aa)) lie on the Extracellular side of the membrane. 3 N-linked (GlcNAc...) asparagine glycosylation sites follow: Asn-827, Asn-874, and Asn-999. Residues 1027–1047 (LLLSISVVLACTFLVCALFLL) form a helical membrane-spanning segment. The Cytoplasmic segment spans residues 1048-1053 (NPWTAG). The helical transmembrane segment at 1054–1074 (IIVVVLALMTVELFGMMGLIG) threads the bilayer. At 1075–1082 (IKLSAVPV) the chain is on the extracellular side. Residues 1083–1101 (VILIASVGIGVEFTVHIAL) form a helical membrane-spanning segment. Topologically, residues 1102–1120 (AFLTAIGDKNRRAVLALEH) are cytoplasmic. The helical transmembrane segment at 1121-1141 (MFAPVLDGAVSTLLGVLMLAG) threads the bilayer. Residues 1142–1153 (SEFDFIVRYFFA) lie on the Extracellular side of the membrane. Residues 1154–1174 (VLAILTILGVLNGLVLLPVLL) traverse the membrane as a helical segment. Over 1175 to 1442 (SFFGPYPEVS…EERTAGKISE (268 aa)) the chain is Cytoplasmic. Disordered stretches follow at residues 1188–1231 (GRNR…TTVS) and 1266–1338 (STVV…LNHK). A compositionally biased stretch (low complexity) spans 1217–1226 (SDSSDSEYSS). Polar residues predominate over residues 1276-1293 (QSSPRLQSNPEAGTQQVW).

The protein belongs to the patched family. In terms of processing, glycosylation is necessary for SHH binding. As to expression, expression is seen in the embryonic neural tube, sclerotome, visceral mesoderm, and limb bud.

The protein resides in the membrane. Functionally, acts as a receptor for sonic hedgehog (SHH), indian hedgehog (IHH) and desert hedgehog (DHH). Associates with the smoothened protein (SMO) to transduce the hedgehog's proteins signal. The protein is Protein patched homolog 1 (PTCH1) of Gallus gallus (Chicken).